The following is a 329-amino-acid chain: DNA-directed RNA polymerase subunit alpha (329 aa).

An alpha N-terminal domain (alpha-NTD) region spans residues 1–235; sequence MLGSVTDFLK…EQLDAFVDLR (235 aa). The tract at residues 249-329 is alpha C-terminal domain (alpha-CTD); sequence FDPILLRPVD…NWPPASLADN (81 aa).

The protein belongs to the RNA polymerase alpha chain family. As to quaternary structure, homodimer. The RNAP catalytic core consists of 2 alpha, 1 beta, 1 beta' and 1 omega subunit. When a sigma factor is associated with the core the holoenzyme is formed, which can initiate transcription.

It carries out the reaction RNA(n) + a ribonucleoside 5'-triphosphate = RNA(n+1) + diphosphate. Its function is as follows. DNA-dependent RNA polymerase catalyzes the transcription of DNA into RNA using the four ribonucleoside triphosphates as substrates. This chain is DNA-directed RNA polymerase subunit alpha, found in Tolumonas auensis (strain DSM 9187 / NBRC 110442 / TA 4).